Consider the following 432-residue polypeptide: Golgin subfamily A member 6-like protein 9 (432 aa).

Residues 1–11 show a composition bias toward pro residues; that stretch reads MWPQPRLPPHP. Disordered stretches follow at residues 1 to 77 and 349 to 411; these read MWPQ…YGEG and KELE…AGGA. Residues 51-62 are compositionally biased toward polar residues; sequence NGSSPDTFTSGG. Residues 157–354 adopt a coiled-coil conformation; the sequence is SKMEQLQDET…EQQVKELEKS (198 aa). Residues 349 to 362 show a composition bias toward basic and acidic residues; sequence KELEKSGGAEEPRG. Positions 366-381 are enriched in low complexity; that stretch reads AAAARPVAGAPVPQGA.

This sequence belongs to the GOLGA6 family.

The protein is Golgin subfamily A member 6-like protein 9 of Homo sapiens (Human).